Reading from the N-terminus, the 166-residue chain is Small ribosomal subunit protein uS5 (166 aa).

An S5 DRBM domain is found at 12-75; that stretch reads YIEKLVQVNR…EAARRNMIQV (64 aa).

The protein belongs to the universal ribosomal protein uS5 family. In terms of assembly, part of the 30S ribosomal subunit. Contacts proteins S4 and S8.

In terms of biological role, with S4 and S12 plays an important role in translational accuracy. Its function is as follows. Located at the back of the 30S subunit body where it stabilizes the conformation of the head with respect to the body. In Pseudomonas fluorescens (strain ATCC BAA-477 / NRRL B-23932 / Pf-5), this protein is Small ribosomal subunit protein uS5.